We begin with the raw amino-acid sequence, 178 residues long: Cytochrome b6-f complex iron-sulfur subunit (178 aa).

The chain crosses the membrane as a helical span at residues 20 to 42 (LLTFGSVTGVALGALYPVVNYFI). The Rieske domain occupies 65–161 (ASGWLADHKE…VNVENDNVFV (97 aa)). Cys-107, His-109, Cys-125, and His-128 together coordinate [2Fe-2S] cluster. Cysteines 112 and 127 form a disulfide.

Belongs to the Rieske iron-sulfur protein family. As to quaternary structure, the 4 large subunits of the cytochrome b6-f complex are cytochrome b6, subunit IV (17 kDa polypeptide, PetD), cytochrome f and the Rieske protein, while the 4 small subunits are PetG, PetL, PetM and PetN. The complex functions as a dimer. [2Fe-2S] cluster is required as a cofactor.

It is found in the cellular thylakoid membrane. It carries out the reaction 2 oxidized [plastocyanin] + a plastoquinol + 2 H(+)(in) = 2 reduced [plastocyanin] + a plastoquinone + 4 H(+)(out). Its function is as follows. Component of the cytochrome b6-f complex, which mediates electron transfer between photosystem II (PSII) and photosystem I (PSI), cyclic electron flow around PSI, and state transitions. The chain is Cytochrome b6-f complex iron-sulfur subunit from Synechococcus sp. (strain RCC307).